The chain runs to 193 residues: Putative manganese efflux pump MntP (193 aa).

6 helical membrane passes run 3–23 (PLSI…AAIG), 37–57 (VRAG…GWML), 66–86 (AAFD…HMIV), 109–131 (LALA…SLAF), 146–166 (CTLS…ALIG), and 171–191 (ILGG…HLSG).

The protein belongs to the MntP (TC 9.B.29) family.

It localises to the cell inner membrane. In terms of biological role, probably functions as a manganese efflux pump. The chain is Putative manganese efflux pump MntP from Xanthomonas campestris pv. campestris (strain 8004).